Reading from the N-terminus, the 164-residue chain is Ubiquitin-fold modifier-conjugating enzyme 1 (164 aa).

Residue C116 is the Glycyl thioester intermediate of the active site.

Belongs to the ubiquitin-conjugating enzyme family. UFC1 subfamily.

Functionally, E2-like enzyme which forms an intermediate with UFM1 via a thioester linkage. This Drosophila erecta (Fruit fly) protein is Ubiquitin-fold modifier-conjugating enzyme 1.